The sequence spans 530 residues: Putative sulfate transporter YvdB (530 aa).

10 consecutive transmembrane segments (helical) span residues 19–39, 41–61, 68–88, 91–111, 121–141, 164–184, 192–212, 241–261, 313–333, and 384–404; these read LIAG…FAIA, GVEP…ISLF, IGGP…QYGL, LLIA…FKLG, VIVG…IANF, LGTF…ILLV, VPGA…FFPD, MVML…ESIL, AVSP…LLVF, and VLFD…VFFI. In terms of domain architecture, STAS spans 420 to 530; the sequence is PVLAKREDPS…FFDHHDEITG (111 aa).

The protein belongs to the SLC26A/SulP transporter (TC 2.A.53) family.

It localises to the cell membrane. This Bacillus subtilis (strain 168) protein is Putative sulfate transporter YvdB (yvdB).